A 175-amino-acid chain; its full sequence is MAKQPTVLWAQRESLVYLTIEVDEAKIEELKGEGNKLHFQGSSKTDKYEATLEFFDEIDPASVKHTGSSTRVVEITVQKKTPAWWPRLLQNKGKVHWLKVDFGKWKDEDEDDEAEDAGAGIGGGMANGFDLNQYMSQMGGAGGADFGGLEDDEEDDDMPDLEDNEEEEGKNGTRA.

The region spanning 2–89 is the CS domain; the sequence is AKQPTVLWAQ…KTPAWWPRLL (88 aa). Positions 109 to 175 are disordered; it reads DEDDEAEDAG…EEEGKNGTRA (67 aa). Over residues 148–168 the composition is skewed to acidic residues; the sequence is GLEDDEEDDDMPDLEDNEEEE.

Belongs to the p23/wos2 family. As to expression, expressed in anterior and posterior neurons including ASE, AWC, ASI and ADL amphids and phasmid sensory neurons, peripheral neurons and ventral cord motorneurons. Additionally expressed in body wall muscle, pharynx, vulva, germ cells and intestine.

In terms of biological role, co-chaperone for hsp90/daf-21. Involved in regulation of longevity, larval entry and exit from the dauer stage of development and response to environmental cues, such as oxidative stress, in a temperature-dependent manner. Role in daf-16 and hsf-1 inhibition at elevated temperatures. The polypeptide is Co-chaperone protein daf-41 (Caenorhabditis elegans).